The primary structure comprises 60 residues: UPF0434 protein Vapar_2640 (60 aa).

It belongs to the UPF0434 family.

The sequence is that of UPF0434 protein Vapar_2640 from Variovorax paradoxus (strain S110).